The chain runs to 210 residues: Cytochrome c4 (210 aa).

An N-terminal signal peptide occupies residues 1-20 (MNKVLVSLLLTLGITGMAHA). 8 residues coordinate heme c: cysteine 34, cysteine 37, histidine 38, methionine 86, cysteine 139, cysteine 142, histidine 143, and methionine 187.

Binds 2 heme c groups covalently per subunit.

The protein resides in the periplasm. Functionally, diheme, high potential cytochrome c believed to be an intermediate electron donor to terminal oxidation systems. The chain is Cytochrome c4 (cc4) from Stutzerimonas stutzeri (Pseudomonas stutzeri).